Reading from the N-terminus, the 578-residue chain is Phenylalanine--tRNA ligase beta subunit (578 aa).

Residues 292 to 370 (FDTDEKSVSH…RAYGFDNLEP (79 aa)) enclose the B5 domain. Mg(2+) contacts are provided by Asp-348, Asp-354, Asp-357, and Asp-358.

The protein belongs to the phenylalanyl-tRNA synthetase beta subunit family. Type 2 subfamily. Tetramer of two alpha and two beta subunits. It depends on Mg(2+) as a cofactor.

It localises to the cytoplasm. The enzyme catalyses tRNA(Phe) + L-phenylalanine + ATP = L-phenylalanyl-tRNA(Phe) + AMP + diphosphate + H(+). This chain is Phenylalanine--tRNA ligase beta subunit, found in Halorubrum lacusprofundi (strain ATCC 49239 / DSM 5036 / JCM 8891 / ACAM 34).